Reading from the N-terminus, the 341-residue chain is Methionine import ATP-binding protein MetN 2 (341 aa).

Residues isoleucine 2 to valine 241 enclose the ABC transporter domain. ATP is bound at residue glycine 38–serine 45.

The protein belongs to the ABC transporter superfamily. Methionine importer (TC 3.A.1.24) family. In terms of assembly, the complex is composed of two ATP-binding proteins (MetN), two transmembrane proteins (MetI) and a solute-binding protein (MetQ).

It localises to the cell membrane. It carries out the reaction L-methionine(out) + ATP + H2O = L-methionine(in) + ADP + phosphate + H(+). The catalysed reaction is D-methionine(out) + ATP + H2O = D-methionine(in) + ADP + phosphate + H(+). Its function is as follows. Part of the ABC transporter complex MetNIQ involved in methionine import. Responsible for energy coupling to the transport system. The chain is Methionine import ATP-binding protein MetN 2 from Staphylococcus aureus (strain N315).